Here is a 318-residue protein sequence, read N- to C-terminus: Taste receptor type 2 member 60 (318 aa).

Topologically, residues 1-7 (MNGDHMV) are extracellular. The chain crosses the membrane as a helical span at residues 8 to 28 (LGSSVTDKKAIILVTILLLLR). Residues 29 to 40 (LVAIAGNGFITA) lie on the Cytoplasmic side of the membrane. Residues 41–61 (ALGVEWVLRRMLLPCDKLLVS) traverse the membrane as a helical segment. At 62–88 (LGASHFCLQSVVMGKTIYVFLYPMAFP) the chain is on the extracellular side. Residues 89–109 (YNPVLQFLAFQWDFLNAATLW) form a helical membrane-spanning segment. The Cytoplasmic segment spans residues 110-128 (FSTWLSVFYCVKIATFTHP). The helical transmembrane segment at 129–149 (VFFWLKHKLSGWLPWMIFSYV) threads the bilayer. Over 150–183 (GLSSFTTILFFIGNHRMYQNYLKNHLQPWNVTGN) the chain is Extracellular. Asn179 carries an N-linked (GlcNAc...) asparagine glycan. A helical membrane pass occupies residues 184–204 (SIRSYCEKFYLFPLKMITWTM). Over 205–234 (PTAVFFICMILLITSLGRHMKKALLTTSGF) the chain is Cytoplasmic. Residues 235–255 (REPSVQAHIKALLALLSFAML) form a helical membrane-spanning segment. Residues 256–264 (FISYFLSLV) lie on the Extracellular side of the membrane. Residues 265 to 285 (FSAAGIFPPLDFKFWVWESVI) form a helical membrane-spanning segment. The Cytoplasmic portion of the chain corresponds to 286 to 318 (YLCAAVHPIILLFSNCRLRAVLKSRRSSRCGTP).

Belongs to the G-protein coupled receptor T2R family.

It is found in the membrane. Receptor that may play a role in the perception of bitterness and is gustducin-linked. May play a role in sensing the chemical composition of the gastrointestinal content. The activity of this receptor may stimulate alpha gustducin, mediate PLC-beta-2 activation and lead to the gating of TRPM5. The sequence is that of Taste receptor type 2 member 60 (TAS2R60) from Pan paniscus (Pygmy chimpanzee).